A 673-amino-acid polypeptide reads, in one-letter code: Cyclic nucleotide-binding domain-containing protein 2 (673 aa).

Residues 1-15 (MNRSANPEAASSTSH) are compositionally biased toward polar residues. A disordered region spans residues 1-89 (MNRSANPEAA…PQPKDRPGVQ (89 aa)). The span at 43–86 (PADKSDTTESKSESGSDSRSEEDKESPASIKEIKAETPQPKDRP) shows a compositional bias: basic and acidic residues. 206-329 (CYRSYTESLQ…ETQYRYNFFR (124 aa)) lines the a nucleoside 3',5'-cyclic phosphate pocket.

In terms of tissue distribution, testis-specific. Exclusively expressed in testicular germ cells while it is not present in mature sperm (at protein level).

The protein localises to the cytoplasm. It localises to the cytosol. In terms of biological role, essential for male fertility. Plays an important role in spermatogenesis and regulates sperm motility by controlling the development of the flagellar bending of sperm. This is Cyclic nucleotide-binding domain-containing protein 2 (Cnbd2) from Mus musculus (Mouse).